The following is a 568-amino-acid chain: Potassium-transporting ATPase potassium-binding subunit (568 aa).

A run of 10 helical transmembrane segments spans residues 7-27, 65-85, 135-155, 177-197, 254-274, 286-306, 383-403, 422-442, 489-509, and 530-550; these read AEIA…GLFL, SYAL…YAIL, AGLT…AAAV, VSLY…VALG, LTNL…VVAF, ALIT…YWTE, GLYG…LMVG, MLAV…AAVL, LGIA…AIAG, and LFIG…FFPA.

This sequence belongs to the KdpA family. The system is composed of three essential subunits: KdpA, KdpB and KdpC.

Its subcellular location is the cell inner membrane. Its function is as follows. Part of the high-affinity ATP-driven potassium transport (or Kdp) system, which catalyzes the hydrolysis of ATP coupled with the electrogenic transport of potassium into the cytoplasm. This subunit binds the periplasmic potassium ions and delivers the ions to the membrane domain of KdpB through an intramembrane tunnel. In Beijerinckia indica subsp. indica (strain ATCC 9039 / DSM 1715 / NCIMB 8712), this protein is Potassium-transporting ATPase potassium-binding subunit.